Reading from the N-terminus, the 141-residue chain is uncharacterized protein (141 aa).

An HTH marR-type domain is found at 4 to 139; it reads RTQMMYDMET…LIELFSKLDK (136 aa). The H-T-H motif DNA-binding region spans 53-76; the sequence is VTEFAPILEVSASHITAVTDALVE.

This is an uncharacterized protein from Bacillus subtilis (strain 168).